A 955-amino-acid polypeptide reads, in one-letter code: Vacuolar membrane protease (955 aa).

Residues 1–16 (MASLRLPRANPLAFTR) are Cytoplasmic-facing. The chain crosses the membrane as a helical span at residues 17–37 (WPVTVITAIVYLALLIPLLVV). Residues 38 to 390 (HHVVPSAPSS…STFVLFQLHT (353 aa)) lie on the Vacuolar side of the membrane. Residues N53 and N119 are each glycosylated (N-linked (GlcNAc...) asparagine). Residues H174 and D186 each coordinate Zn(2+). The active-site Proton acceptor is the E220. Residues E221, E246, and H319 each coordinate Zn(2+). Residues 391–411 (LFALLVTLLIVGPLTLLFTSI) form a helical membrane-spanning segment. At 412–442 (ALTKADKMYLFRSSAKSEDRLDVVPLQGLRG) the chain is on the cytoplasmic side. Residues 443–463 (FFRFPFLFGIPTVVTVGLAYL) traverse the membrane as a helical segment. At 464-473 (VTKVNPYIIH) the chain is on the vacuolar side. Residues 474-494 (SSAYAVWSMMVAAWVFLAWFV) traverse the membrane as a helical segment. The Cytoplasmic segment spans residues 495-508 (SRVADFARPSAFHR). Residues 509 to 529 (IYTLTWMYVLSWVSAVIATVY) traverse the membrane as a helical segment. The Vacuolar segment spans residues 530–533 (ANQR). A helical membrane pass occupies residues 534–554 (GLAGGYFIFFFHAGIFLAKWI). Over 555 to 656 (SYLELFALPS…WSYALPKWTW (102 aa)) the chain is Cytoplasmic. Residues 574–590 (SASGRASGHGSRRGTTS) are compositionally biased toward low complexity. Residues 574 to 611 (SASGRASGHGSRRGTTSGEDDGEEAEEEPTESTSLLGS) are disordered. Residues 591–603 (GEDDGEEAEEEPT) show a composition bias toward acidic residues. A helical membrane pass occupies residues 657-677 (VLQLLLTAPITLIMVGPLALL). The Vacuolar segment spans residues 678 to 693 (TISAISQTGQDGGHPL). The chain crosses the membrane as a helical span at residues 694–714 (FAYVAIAIFTTIMLTPLLPFI). Topologically, residues 715–721 (HRYTYHV) are cytoplasmic. A helical transmembrane segment spans residues 722–742 (PLFLLAVFLGTLIYNLVAFPF). Topologically, residues 743-955 (SDSNRLKLYY…RRAFEIGNDD (213 aa)) are vacuolar. N-linked (GlcNAc...) asparagine glycosylation occurs at N826.

This sequence belongs to the peptidase M28 family. Zn(2+) serves as cofactor.

It localises to the vacuole membrane. Its function is as follows. May be involved in vacuolar sorting and osmoregulation. This is Vacuolar membrane protease from Aspergillus oryzae (strain ATCC 42149 / RIB 40) (Yellow koji mold).